The following is a 187-amino-acid chain: Benzene 1,2-dioxygenase subunit beta (187 aa).

The protein belongs to the bacterial ring-hydroxylating dioxygenase beta subunit family. As to quaternary structure, this dioxygenase system consists of four proteins: the two subunits of the hydroxylase component (BedC1 and BedC2), a ferredoxin (BedB) and a ferredoxin reductase (BedA).

The enzyme catalyses benzene + NADH + O2 + H(+) = cis-1,2-dihydrobenzene-1,2-diol + NAD(+). It participates in aromatic compound metabolism; benzene degradation; catechol from benzene: step 1/2. In terms of biological role, the beta subunit may be responsible for the substrate specificity of the enzyme. This chain is Benzene 1,2-dioxygenase subunit beta (bedC2), found in Pseudomonas putida (Arthrobacter siderocapsulatus).